The following is a 635-amino-acid chain: BTB/POZ domain and ankyrin repeat-containing protein NPR2 (635 aa).

In terms of domain architecture, BTB spans 97-191 (SDADVDVADG…LYTGKLRPAP (95 aa)). The span at 138 to 152 (AAGGGGGGGGGGGER) shows a compositional bias: gly residues. The segment at 138 to 157 (AAGGGGGGGGGGGERTGGRP) is disordered. The C2HC NPR-type zinc-finger motif lies at 194–208 (VVSCADPMCPHDSCP). 4 residues coordinate Zn(2+): C197, C202, H204, and C207. ANK repeat units lie at residues 317–347 (KRVRRIHRALDSDDVELVKLLLNESEITLDD), 349–376 (NALHYAAAYCDSKVVSELLDLRLANLNL), and 380–409 (RGYTALHLAAMRREPAIIMCLLNKGAAVSQ). Residues 439–576 (ESNKDRLCID…FLEDDLPDSP (138 aa)) are salicylic acid-binding core (SBC). Salicylate is bound at residue R484.

Belongs to the plant 'ANKYRIN-BTB/POZ' family. 'NPR1-like' subfamily. In terms of assembly, interacts with NRR. Interacts with TGAL1 and TGAL11.

Its subcellular location is the nucleus. It participates in protein modification; protein ubiquitination. Salicylic acid (SA)-binding substrate-specific adapter of an E3 ubiquitin-protein ligase complex (CUL3-RBX1-BTB) which mediates the ubiquitination and subsequent proteasomal degradation of target proteins. May be involved in regulating basal defense responses against pathogens, and may be involved in crosstalk between SA- and JA-dependent signaling pathways. Does not seem to be involved in defense response against the bacterial blight disease caused by Xanthomonas oryzae pv. oryzae (Xoo). Over-expression of NPR2/NH2 does not confer disease resistance to Xoo. The polypeptide is BTB/POZ domain and ankyrin repeat-containing protein NPR2 (Oryza sativa subsp. japonica (Rice)).